The sequence spans 248 residues: L-seryl-tRNA(Sec) kinase (248 aa).

Position 7 to 14 (7 to 14 (GLPGVGKS)) interacts with ATP.

The protein belongs to the L-seryl-tRNA(Sec) kinase family.

It catalyses the reaction L-seryl-tRNA(Sec) + ATP = O-phospho-L-seryl-tRNA(Sec) + ADP. Its pathway is aminoacyl-tRNA biosynthesis; selenocysteinyl-tRNA(Sec) biosynthesis; selenocysteinyl-tRNA(Sec) from L-seryl-tRNA(Sec) (archaeal/eukaryal route): step 1/2. Specifically phosphorylates seryl-tRNA(Sec) to O-phosphoseryl-tRNA(Sec), an activated intermediate for selenocysteine biosynthesis. This Methanocaldococcus jannaschii (strain ATCC 43067 / DSM 2661 / JAL-1 / JCM 10045 / NBRC 100440) (Methanococcus jannaschii) protein is L-seryl-tRNA(Sec) kinase (pstK).